The chain runs to 208 residues: Mediator of RNA polymerase II transcription subunit 18 (208 aa).

The protein belongs to the Mediator complex subunit 18 family. Component of the Mediator complex.

Its subcellular location is the nucleus. Its function is as follows. Component of the Mediator complex, a coactivator involved in the regulated transcription of nearly all RNA polymerase II-dependent genes. Mediator functions as a bridge to convey information from gene-specific regulatory proteins to the basal RNA polymerase II transcription machinery. Mediator is recruited to promoters by direct interactions with regulatory proteins and serves as a scaffold for the assembly of a functional preinitiation complex with RNA polymerase II and the general transcription factors. The polypeptide is Mediator of RNA polymerase II transcription subunit 18 (med18) (Xenopus tropicalis (Western clawed frog)).